A 365-amino-acid polypeptide reads, in one-letter code: MKTSFLAHSVAIVRSNFKGLLFTACIVIFAMYLSSVQSIKDTTHLAATAFAIIIGVLLSPWFFKYQHHFQAGVHFSAKKLLRLGIVLYGFNITLTELLSVGLKGFLLSAIVIFFVFIIALFVGTKIFKLDKETSMLVGAGSAICGAAAVLALESSLKSDPFKGILAVGTVVIFGLVFMFLYPIAFSLNLFPFFDQNAMGVFMGATLHEVANVAGAAEMAKDMAGFEQGASNVAVIIKMMRVILLVPFLLIVTYFFAKNQHSSSGKTAKSITIPYFAFAFLGMIVLNTYLASKESILGIATSDIISLGKTLCTLCIVFAMAALGLQIDFKKFLKSGSRVFGLAFVLGLVLIFGGYFLTLAFKGILW.

A run of 11 helical transmembrane segments spans residues 12–34 (IVRSNFKGLLFTACIVIFAMYLS), 44–63 (HLAATAFAIIIGVLLSPWFF), 83–100 (LGIVLYGFNITLTELLSV), 105–127 (FLLSAIVIFFVFIIALFVGTKIF), 134–153 (SMLVGAGSAICGAAAVLALE), 163–185 (GILAVGTVVIFGLVFMFLYPIAF), 197–219 (AMGVFMGATLHEVANVAGAAEMA), 234–256 (VIIKMMRVILLVPFLLIVTYFFA), 269–288 (SITIPYFAFAFLGMIVLNTY), 303–325 (IISLGKTLCTLCIVFAMAALGLQ), and 338–360 (VFGLAFVLGLVLIFGGYFLTLAF).

It belongs to the UPF0324 family.

The protein resides in the cell membrane. The protein is UPF0324 membrane protein Cj0999c of Campylobacter jejuni subsp. jejuni serotype O:2 (strain ATCC 700819 / NCTC 11168).